The sequence spans 239 residues: tRNA (guanine-N(7)-)-methyltransferase (239 aa).

Residues glutamate 69, glutamate 94, aspartate 121, and aspartate 144 each coordinate S-adenosyl-L-methionine. Aspartate 144 is an active-site residue. Lysine 148 contributes to the substrate binding site. The segment at 150 to 155 (RHNKRR) is interaction with RNA. Substrate-binding positions include aspartate 180 and 217–220 (TKFE).

Belongs to the class I-like SAM-binding methyltransferase superfamily. TrmB family. In terms of assembly, monomer.

The catalysed reaction is guanosine(46) in tRNA + S-adenosyl-L-methionine = N(7)-methylguanosine(46) in tRNA + S-adenosyl-L-homocysteine. It functions in the pathway tRNA modification; N(7)-methylguanine-tRNA biosynthesis. Its function is as follows. Catalyzes the formation of N(7)-methylguanine at position 46 (m7G46) in tRNA. This is tRNA (guanine-N(7)-)-methyltransferase from Salmonella choleraesuis (strain SC-B67).